The following is a 200-amino-acid chain: Recombination protein RecR (200 aa).

The C4-type zinc-finger motif lies at 59-74 (CEKCNTFTEAQICEVC). The Toprim domain maps to 82-177 (ALLCVVETPA…AVTRLARGVP (96 aa)).

The protein belongs to the RecR family.

Its function is as follows. May play a role in DNA repair. It seems to be involved in an RecBC-independent recombinational process of DNA repair. It may act with RecF and RecO. This Burkholderia mallei (strain NCTC 10247) protein is Recombination protein RecR.